The chain runs to 490 residues: Glycogen synthase kinase-3 alpha (490 aa).

Residues 1–15 (MSGGGPSGGGPGGSG) are compositionally biased toward gly residues. The segment at 1–97 (MSGGGPSGGG…PPGVKLGRDS (97 aa)) is disordered. Ser2 carries the post-translational modification N-acetylserine. Phosphoserine is present on Ser2. Position 21 is a phosphoserine; by PKB/AKT1 (Ser21). Positions 25-82 (PGGGGGGGGGGPGGSASGPGGTGGGKASVGAMGGGVGASSSGGGPSGSGGGGSGGPGA) are enriched in gly residues. Residues Ser72, Ser77, and Ser97 each carry the phosphoserine modification. The Protein kinase domain occupies 119–404 (YTDIKVIGNG…PLEACAHSFF (286 aa)). ATP-binding positions include 125 to 133 (IGNGSFGVV) and Lys148. Asp244 functions as the Proton acceptor in the catalytic mechanism. Tyr279 carries the post-translational modification Phosphotyrosine. A disordered region spans residues 451-490 (GPASPLTTSYNPSSQALTEAQTGQDWQPSDATTATLASSS). Polar residues predominate over residues 455-480 (PLTTSYNPSSQALTEAQTGQDWQPSD). A compositionally biased stretch (low complexity) spans 481 to 490 (ATTATLASSS).

This sequence belongs to the protein kinase superfamily. CMGC Ser/Thr protein kinase family. GSK-3 subfamily. Monomer. Interacts with AXIN1 and CTNNB1/beta-catenin. Interacts with ARRB2. Interacts with CTNND2. Interacts with LMBR1L. Interacts with DDX3X. Interacts with TNFRSF10B. In terms of processing, phosphorylated by AKT1 at Ser-21: upon insulin-mediated signaling, the activated PKB/AKT1 protein kinase phosphorylates and deactivates GSK3A, resulting in the dephosphorylation and activation of GYS1. Activated by phosphorylation at Tyr-279.

It carries out the reaction L-seryl-[tau protein] + ATP = O-phospho-L-seryl-[tau protein] + ADP + H(+). It catalyses the reaction L-threonyl-[tau protein] + ATP = O-phospho-L-threonyl-[tau protein] + ADP + H(+). The catalysed reaction is L-seryl-[protein] + ATP = O-phospho-L-seryl-[protein] + ADP + H(+). The enzyme catalyses L-threonyl-[protein] + ATP = O-phospho-L-threonyl-[protein] + ADP + H(+). Activated by phosphorylation at Tyr-279. In response to insulin, inhibited by phosphorylation at Ser-21 by PKB/AKT1; phosphorylation at this site causes a conformational change, preventing access of substrates to the active site. Inhibited by lithium. Its function is as follows. Constitutively active protein kinase that acts as a negative regulator in the hormonal control of glucose homeostasis, Wnt signaling and regulation of transcription factors and microtubules, by phosphorylating and inactivating glycogen synthase (GYS1 or GYS2), CTNNB1/beta-catenin, APC and AXIN1. Requires primed phosphorylation of the majority of its substrates. Contributes to insulin regulation of glycogen synthesis by phosphorylating and inhibiting GYS1 activity and hence glycogen synthesis. Regulates glycogen metabolism in liver, but not in muscle. May also mediate the development of insulin resistance by regulating activation of transcription factors. In Wnt signaling, regulates the level and transcriptional activity of nuclear CTNNB1/beta-catenin. Facilitates amyloid precursor protein (APP) processing and the generation of APP-derived amyloid plaques found in Alzheimer disease. May be involved in the regulation of replication in pancreatic beta-cells. Is necessary for the establishment of neuronal polarity and axon outgrowth. Through phosphorylation of the anti-apoptotic protein MCL1, may control cell apoptosis in response to growth factors deprivation. Acts as a regulator of autophagy by mediating phosphorylation of KAT5/TIP60 under starvation conditions, activating KAT5/TIP60 acetyltransferase activity and promoting acetylation of key autophagy regulators, such as ULK1 and RUBCNL/Pacer. Negatively regulates extrinsic apoptotic signaling pathway via death domain receptors. Promotes the formation of an anti-apoptotic complex, made of DDX3X, BRIC2 and GSK3B, at death receptors, including TNFRSF10B. The anti-apoptotic function is most effective with weak apoptotic signals and can be overcome by stronger stimulation. The chain is Glycogen synthase kinase-3 alpha (Gsk3a) from Mus musculus (Mouse).